Here is a 94-residue protein sequence, read N- to C-terminus: Small ribosomal subunit protein uS19 (94 aa).

It belongs to the universal ribosomal protein uS19 family.

In terms of biological role, protein S19 forms a complex with S13 that binds strongly to the 16S ribosomal RNA. The polypeptide is Small ribosomal subunit protein uS19 (Caldicellulosiruptor saccharolyticus (strain ATCC 43494 / DSM 8903 / Tp8T 6331)).